Consider the following 341-residue polypeptide: L-threonine 3-dehydrogenase (341 aa).

Residue Cys-38 participates in Zn(2+) binding. Residues Thr-40 and His-43 each act as charge relay system in the active site. Zn(2+) is bound by residues His-63, Glu-64, Cys-93, Cys-96, Cys-99, and Cys-107. Residues Ile-175, Asp-195, Arg-200, 262 to 264 (LGI), and 286 to 287 (IY) each bind NAD(+).

Belongs to the zinc-containing alcohol dehydrogenase family. In terms of assembly, homotetramer. It depends on Zn(2+) as a cofactor.

Its subcellular location is the cytoplasm. The enzyme catalyses L-threonine + NAD(+) = (2S)-2-amino-3-oxobutanoate + NADH + H(+). It functions in the pathway amino-acid degradation; L-threonine degradation via oxydo-reductase pathway; glycine from L-threonine: step 1/2. Its function is as follows. Catalyzes the NAD(+)-dependent oxidation of L-threonine to 2-amino-3-ketobutyrate. In Klebsiella pneumoniae subsp. pneumoniae (strain ATCC 700721 / MGH 78578), this protein is L-threonine 3-dehydrogenase.